The primary structure comprises 225 residues: Platelet-derived growth factor subunit B (225 aa).

An N-terminal signal peptide occupies residues L1 to A12. A propeptide spans E13–R73 (removed in mature form). N55 carries N-linked (GlcNAc...) asparagine glycosylation. Intrachain disulfides connect C89–C133, C122–C170, and C126–C172. The propeptide at R183–K225 is removed in mature form.

This sequence belongs to the PDGF/VEGF growth factor family. Antiparallel homodimer; disulfide-linked. Antiparallel heterodimer with PDGFA; disulfide-linked. The PDGFB homodimer interacts with PDGFRA and PDGFRB homodimers, and with heterodimers formed by PDGFRA and PDGFRB. The heterodimer composed of PDGFA and PDGFB interacts with PDGFRB homodimers, and with heterodimers formed by PDGFRA and PDGFRB. Interacts with XLKD1. Interacts with LRP1. Interacts with SORL1 (via the N-terminal ectodomain). Interacts with CD82; this interaction inhibits PDGFB-mediated signaling pathway. In terms of tissue distribution, expressed in a distinct subpopulation of smooth muscle cells in injured arteries.

It is found in the secreted. Growth factor that plays an essential role in the regulation of embryonic development, cell proliferation, cell migration, survival and chemotaxis. Potent mitogen for cells of mesenchymal origin. Required for normal proliferation and recruitment of pericytes and vascular smooth muscle cells in the central nervous system, skin, lung, heart and placenta. Required for normal blood vessel development, and for normal development of kidney glomeruli. Plays an important role in wound healing. Signaling is modulated by the formation of heterodimers with PDGFA. This is Platelet-derived growth factor subunit B (Pdgfb) from Rattus norvegicus (Rat).